The chain runs to 385 residues: Histidinol-phosphate aminotransferase (385 aa).

An N6-(pyridoxal phosphate)lysine modification is found at K230.

Belongs to the class-II pyridoxal-phosphate-dependent aminotransferase family. Pyridoxal 5'-phosphate serves as cofactor.

The catalysed reaction is L-histidinol phosphate + 2-oxoglutarate = 3-(imidazol-4-yl)-2-oxopropyl phosphate + L-glutamate. Its pathway is amino-acid biosynthesis; L-histidine biosynthesis; L-histidine from 5-phospho-alpha-D-ribose 1-diphosphate: step 7/9. The sequence is that of Histidinol-phosphate aminotransferase from Saccharomyces cerevisiae (strain ATCC 204508 / S288c) (Baker's yeast).